We begin with the raw amino-acid sequence, 61 residues long: Beta-defensin 133 (61 aa).

Positions 1-23 (MKIHVFLFVLFFFLVPIATRVKC) are cleaved as a signal peptide. 2 disulfide bridges follow: C31–C59 and C38–C52.

This sequence belongs to the beta-defensin family.

It is found in the secreted. Functionally, has antibacterial activity. The chain is Beta-defensin 133 (DEFB133) from Homo sapiens (Human).